Reading from the N-terminus, the 2036-residue chain is Ral GTPase-activating protein subunit alpha-1 (2036 aa).

Disordered stretches follow at residues 343 to 384 (LVSR…SSLC) and 476 to 497 (EEGE…RNSS). Positions 345-365 (SREESKNDNADKTDRTTEPEQ) are enriched in basic and acidic residues. 2 stretches are compositionally biased toward polar residues: residues 366–384 (SHSN…SSLC) and 486–497 (GTNTADHVRNSS). Residues serine 711 and serine 721 each carry the phosphoserine modification. The segment at 715-753 (SFSRGWSRDQPGQAPMRQRSATTTGSPGTEKARSIVRQK) is disordered. Position 754 is a phosphothreonine (threonine 754). Serine 773 bears the Phosphoserine mark. A Phosphothreonine modification is found at threonine 778. 4 positions are modified to phosphoserine: serine 797, serine 860, serine 861, and serine 864. Disordered regions lie at residues 849 to 910 (SGNA…SDSH) and 982 to 1009 (TITG…STLN). Polar residues predominate over residues 850-863 (GNASTMTRRGSSPG). Positions 895–910 (SPASAGSSDLISSDSH) are enriched in low complexity. The segment covering 983–1009 (ITGSESASPVHSPLGSRSQTPSPSTLN) has biased composition (polar residues). Phosphoserine occurs at positions 986, 990, 994, and 1000. Threonine 1002 is modified (phosphothreonine). Phosphoserine occurs at positions 1004 and 1478. A minimal domain that binds to TCF3/E12 region spans residues 1327 to 2035 (FTNKTVAHVA…PYHHLPSDAD (709 aa)). Positions 1716–1744 (KQENDVINAILKQHTEEKEFVEKHFNDLN) form a coiled coil. The region spanning 1796 to 2004 (LRNLDSRQCR…EERARYLQTI (209 aa)) is the Rap-GAP domain.

As to quaternary structure, component of the heterodimeric RalGAP1 complex with RALGAPB. Heterodimerization is required for activity. Interacts with the HLH region of TCF3/isoform E12. In terms of tissue distribution, widely expressed.

It is found in the cytoplasm. The protein localises to the nucleus. Functionally, catalytic subunit of the heterodimeric RalGAP1 complex which acts as a GTPase activator for the Ras-like small GTPases RALA and RALB. The protein is Ral GTPase-activating protein subunit alpha-1 (RALGAPA1) of Homo sapiens (Human).